The chain runs to 209 residues: Small ribosomal subunit protein uS4 (209 aa).

The S4 RNA-binding domain occupies 98-159; sequence RRLDSAVYRL…KSRKITRIND (62 aa).

It belongs to the universal ribosomal protein uS4 family. Part of the 30S ribosomal subunit. Contacts protein S5. The interaction surface between S4 and S5 is involved in control of translational fidelity.

Its function is as follows. One of the primary rRNA binding proteins, it binds directly to 16S rRNA where it nucleates assembly of the body of the 30S subunit. In terms of biological role, with S5 and S12 plays an important role in translational accuracy. This chain is Small ribosomal subunit protein uS4, found in Syntrophotalea carbinolica (strain DSM 2380 / NBRC 103641 / GraBd1) (Pelobacter carbinolicus).